We begin with the raw amino-acid sequence, 203 residues long: High frequency lysogenization protein HflD homolog (203 aa).

It belongs to the HflD family.

Its subcellular location is the cytoplasm. It is found in the cell inner membrane. The polypeptide is High frequency lysogenization protein HflD homolog (Pasteurella multocida (strain Pm70)).